Here is a 280-residue protein sequence, read N- to C-terminus: Large ribosomal subunit protein uL2 (280 aa).

Disordered regions lie at residues 33–55 (LTEG…RRRG) and 224–266 (AMNP…KASQ). The span at 256-266 (TRTRNKNKASQ) shows a compositional bias: basic residues.

This sequence belongs to the universal ribosomal protein uL2 family. Part of the 50S ribosomal subunit. Forms a bridge to the 30S subunit in the 70S ribosome.

Functionally, one of the primary rRNA binding proteins. Required for association of the 30S and 50S subunits to form the 70S ribosome, for tRNA binding and peptide bond formation. It has been suggested to have peptidyltransferase activity; this is somewhat controversial. Makes several contacts with the 16S rRNA in the 70S ribosome. The protein is Large ribosomal subunit protein uL2 of Ruegeria pomeroyi (strain ATCC 700808 / DSM 15171 / DSS-3) (Silicibacter pomeroyi).